Reading from the N-terminus, the 98-residue chain is Ferredoxin-like protein (98 aa).

Residues 57–87 form the 4Fe-4S ferredoxin-type domain; that stretch reads GQVEVTADGCMECGTCRVLCEANGDVEWSYP.

To ferredoxins from P.putida and C.tartarivorum, ferredoxin I from A.vinelandii, ferredoxin II from D.desulfuricans.

Could be a 3Fe-4S cluster-containing protein. In Rhizobium meliloti (strain 1021) (Ensifer meliloti), this protein is Ferredoxin-like protein (fixX).